Consider the following 446-residue polypeptide: G patch domain-containing protein 4 (446 aa).

Position 1 is an N-acetylmethionine (Met1). At Thr4 the chain carries Phosphothreonine. Residues 11-57 (GMKFAEEQLLKHGWTQGKGLGRKENGITQALRVTLKQDTHGVGHDPA) form the G-patch domain. A Glycyl lysine isopeptide (Lys-Gly) (interchain with G-Cter in SUMO2) cross-link involves residue Lys46. Residue Thr116 is modified to Phosphothreonine. Disordered stretches follow at residues 116–140 (TSGG…SKSP) and 188–446 (QDPG…KKRD). Phosphoserine occurs at positions 128, 130, and 139. Positions 166 to 251 (TMKAKLARLE…KKKRRHQEGK (86 aa)) form a coiled coil. A compositionally biased stretch (basic and acidic residues) spans 219-237 (ASERNDADEKHPEHAEQNI). The segment covering 238–248 (RKSKKKKRRHQ) has biased composition (basic residues). Basic and acidic residues-rich tracts occupy residues 249–268 (EGKV…KEDA), 297–328 (HHEE…ESRA), 363–375 (REAE…DGRS), and 392–409 (LDVR…ESRA). Composition is skewed to basic residues over residues 416 to 427 (RGKRKRQQHPKK) and 437 to 446 (KAKKKQKKRD).

The polypeptide is G patch domain-containing protein 4 (GPATCH4) (Homo sapiens (Human)).